A 129-amino-acid chain; its full sequence is Ig lambda-1 chain V regions MOPC 104E/RPC20/J558/S104 (129 aa).

The signal sequence occupies residues 1 to 19 (MAWISLILSLLALSSGAIS). The residue at position 20 (glutamine 20) is a Pyrrolidone carboxylic acid. Residues 20 to 125 (QAVVTQESAL…HWVFGGGTKL (106 aa)) form the Ig-like domain.

This is Ig lambda-1 chain V regions MOPC 104E/RPC20/J558/S104 from Mus musculus (Mouse).